Consider the following 368-residue polypeptide: DNA replication and repair protein RecF (368 aa).

30–37 (GKNGSGKT) provides a ligand contact to ATP.

The protein belongs to the RecF family.

Its subcellular location is the cytoplasm. In terms of biological role, the RecF protein is involved in DNA metabolism; it is required for DNA replication and normal SOS inducibility. RecF binds preferentially to single-stranded, linear DNA. It also seems to bind ATP. The sequence is that of DNA replication and repair protein RecF from Marinomonas sp. (strain MWYL1).